A 202-amino-acid polypeptide reads, in one-letter code: 3-isopropylmalate dehydratase small subunit (202 aa).

It belongs to the LeuD family. LeuD type 1 subfamily. As to quaternary structure, heterodimer of LeuC and LeuD.

The catalysed reaction is (2R,3S)-3-isopropylmalate = (2S)-2-isopropylmalate. It functions in the pathway amino-acid biosynthesis; L-leucine biosynthesis; L-leucine from 3-methyl-2-oxobutanoate: step 2/4. In terms of biological role, catalyzes the isomerization between 2-isopropylmalate and 3-isopropylmalate, via the formation of 2-isopropylmaleate. The sequence is that of 3-isopropylmalate dehydratase small subunit from Rhizobium etli (strain CIAT 652).